The chain runs to 170 residues: Shikimate kinase (170 aa).

Position 11–16 (11–16 (LSGKST)) interacts with ATP. A Mg(2+)-binding site is contributed by Ser-15. Residues Asp-33, Arg-57, and Gly-79 each contribute to the substrate site. Position 119 (Arg-119) interacts with ATP. A substrate-binding site is contributed by Arg-137.

It belongs to the shikimate kinase family. Monomer. It depends on Mg(2+) as a cofactor.

The protein localises to the cytoplasm. It carries out the reaction shikimate + ATP = 3-phosphoshikimate + ADP + H(+). It functions in the pathway metabolic intermediate biosynthesis; chorismate biosynthesis; chorismate from D-erythrose 4-phosphate and phosphoenolpyruvate: step 5/7. In terms of biological role, catalyzes the specific phosphorylation of the 3-hydroxyl group of shikimic acid using ATP as a cosubstrate. The chain is Shikimate kinase from Clostridium botulinum (strain Loch Maree / Type A3).